The sequence spans 410 residues: Argininosuccinate synthase (410 aa).

10-18 lines the ATP pocket; it reads AYSGGLDTS. L-citrulline contacts are provided by Tyr-88 and Ser-93. Position 118 (Gly-118) interacts with ATP. L-aspartate contacts are provided by Thr-120, Asn-124, and Asp-125. Asn-124 contributes to the L-citrulline binding site. L-citrulline contacts are provided by Arg-128, Ser-177, Ser-186, Glu-262, and Tyr-274.

Belongs to the argininosuccinate synthase family. Type 1 subfamily. In terms of assembly, homotetramer.

It localises to the cytoplasm. The catalysed reaction is L-citrulline + L-aspartate + ATP = 2-(N(omega)-L-arginino)succinate + AMP + diphosphate + H(+). The protein operates within amino-acid biosynthesis; L-arginine biosynthesis; L-arginine from L-ornithine and carbamoyl phosphate: step 2/3. The protein is Argininosuccinate synthase of Thermoanaerobacter pseudethanolicus (strain ATCC 33223 / 39E) (Clostridium thermohydrosulfuricum).